The chain runs to 411 residues: MWIQQLLGLSSMPIRWPGRSLGSHLWILIAMLQLAVDFPSCDSLGPGPEFRLLSRPQRPQRLWSLRTGPPTRLPTPAWSPRAARAERAHGPIQMQTPRARRAHRPRDQVATLGPKGGLTKPPAATRSSPSLTSASASSSMTAGAAEHQSLLKRGRRHTHDAEFNDFDFHGGRPTTETEFIAWGPTGDEEALESNTFPGGFGPTTVSILQTRKTTMAATTTTTAASTATAMTLQTKGVTESLDPWKRTPVGVSTTEPSTSPSNNGKDIQPPRILGETSGLAVHQIITITVSLIMVIAALITTLVLKNCCAPSGHTRRNSHQRKMNQQEESCQNLTDFTPARVPSSVDIFTAYNETLQCSHECVRASVPVYADETLHSTGEYKSTFNGNRSSSADRHLIPVAFVSEKWFEISC.

Positions 1-43 are cleaved as a signal peptide; it reads MWIQQLLGLSSMPIRWPGRSLGSHLWILIAMLQLAVDFPSCDS. Over 44 to 283 the chain is Extracellular; the sequence is LGPGPEFRLL…GETSGLAVHQ (240 aa). Composition is skewed to low complexity over residues 62 to 76, 121 to 145, and 247 to 264; these read LWSL…LPTP, PPAA…AGAA, and TPVG…SNNG. Disordered regions lie at residues 62–156 and 242–270; these read LWSL…RGRR and DPWK…IQPP. The chain crosses the membrane as a helical span at residues 284 to 304; the sequence is IITITVSLIMVIAALITTLVL. The targeting signals stretch occupies residues 304-411; sequence LKNCCAPSGH…VSEKWFEISC (108 aa). Residues 305-411 lie on the Cytoplasmic side of the membrane; sequence KNCCAPSGHT…VSEKWFEISC (107 aa).

In terms of assembly, forms a complex with CDH1 and CTNNB1; interacts directly with CTNNB1. Interacts with AP1M2 and with isoform 2 of BSG/CD147.

Its subcellular location is the basolateral cell membrane. It localises to the apical cell membrane. The protein localises to the cell junction. The protein resides in the adherens junction. Plays a role in cell adhesion and cell migration. This Rattus norvegicus (Rat) protein is Adherens junction-associated protein 1 (Ajap1).